The following is a 345-amino-acid chain: MLLIDIKDKELSQEEVEILEHPLVSGLILFSRNFHDKVQLEALVKSIRQRVKKPLLITVDQEGGRVQRFREGFTKLPAMQAFHTLAKNPQESTALARQTGWLMAAEMFALDIDLSFAPVLDLGHQCKAIGDRSFGENPDAMLPIAEAFIDGMREMGMATTGKHFPGHGHVLADSHLETPFDDRPKEAIFNRDILPFKQLISKGKLSAIMPAHVIYTQCDSQPASGSEYWLKQVLRNQLNFNGVIFSDDLGMKGAGFMGNFVERSEKAIHAGCDLLLLCNEPEGVIQVLDGLKYQPTKTQTERHISLMKRKTVRWNELEASPRYQQAQQRLTALQNDWLEYKAQHC.

Substrate contacts are provided by residues D60, R68, R132, and 162-163 (KH). H175 serves as the catalytic Proton donor/acceptor. Residue D247 is the Nucleophile of the active site.

Belongs to the glycosyl hydrolase 3 family. NagZ subfamily.

The protein resides in the cytoplasm. The enzyme catalyses Hydrolysis of terminal non-reducing N-acetyl-D-hexosamine residues in N-acetyl-beta-D-hexosaminides.. Its pathway is cell wall biogenesis; peptidoglycan recycling. Plays a role in peptidoglycan recycling by cleaving the terminal beta-1,4-linked N-acetylglucosamine (GlcNAc) from peptide-linked peptidoglycan fragments, giving rise to free GlcNAc, anhydro-N-acetylmuramic acid and anhydro-N-acetylmuramic acid-linked peptides. This chain is Beta-hexosaminidase, found in Actinobacillus pleuropneumoniae serotype 5b (strain L20).